The sequence spans 793 residues: E3 ubiquitin-protein ligase UHRF1 (793 aa).

The Ubiquitin-like domain maps to methionine 1 to valine 78. A phosphoserine mark is found at serine 76, serine 91, serine 95, and serine 165. The disordered stretch occupies residues serine 82–glutamate 124. 2 tudor-like regions span residues glycine 133–arginine 209 and aspartate 216–proline 283. Lysine 279 participates in a covalent cross-link: Glycyl lysine isopeptide (Lys-Gly) (interchain with G-Cter in SUMO2). Residue serine 287 is modified to Phosphoserine. The segment at arginine 296–serine 301 is linker. Serine 298 bears the Phosphoserine; by PKA mark. The segment at asparagine 310–aspartate 366 adopts a PHD-type zinc-finger fold. Histone H3R2me0 binding regions lie at residues cysteine 333–aspartate 337 and proline 353–glutamate 355. Serine 368 is modified (phosphoserine). A Glycyl lysine isopeptide (Lys-Gly) (interchain with G-Cter in SUMO2) cross-link involves residue lysine 385. Lysine 399 is subject to N6-acetyllysine. In terms of domain architecture, YDG spans glycine 419–arginine 582. The tract at residues histidine 445–valine 446 is required to promote base flipping. DNA contacts are provided by residues alanine 463–glycine 464 and aspartate 469. Required for formation of a 5-methylcytosine-binding pocket regions lie at residues tyrosine 466–aspartate 469 and tyrosine 478–serine 481. N6-acetyllysine; alternate is present on lysine 546. Lysine 546 participates in a covalent cross-link: Glycyl lysine isopeptide (Lys-Gly) (interchain with G-Cter in SUMO2); alternate. The segment covering arginine 618–glutamate 629 has biased composition (basic and acidic residues). The tract at residues arginine 618–proline 673 is disordered. Serine 639 bears the Phosphoserine; by CDK1 mark. A Phosphoserine modification is found at serine 651. Residue lysine 670 forms a Glycyl lysine isopeptide (Lys-Gly) (interchain with G-Cter in SUMO2) linkage. Phosphoserine is present on residues serine 707 and serine 709. The RING-type zinc-finger motif lies at cysteine 724 to arginine 763.

In terms of assembly, interacts with DNMT3A and DNMT3B. Interacts with DNMT1; the interaction is direct. Interacts with USP7; leading to its deubiquitination. Interacts with histone H3. Interacts with HDAC1, but not with HDAC2. Interacts with BLTP3A. Interacts with PML. Interacts with EHMT2. Binds hemimethylated CpG containing oligonucleotides. Interacts with ZNF263; recruited to the SIX3 promoter along with other proteins involved in chromatin modification and transcriptional corepression where it contributes to transcriptional repression. Interacts with UHRF2. Interacts with FANCD2. Interacts with TET1 isoform 2; this interaction induces the recruitment of TET1 isoform 2 to replicating heterochromatin. In terms of processing, phosphorylation at Ser-298 of the linker region decreases the binding to H3K9me3. Phosphorylation at Ser-639 by CDK1 during M phase impairs interaction with USP7, preventing deubiquitination and leading to degradation by the proteasome. Ubiquitinated; which leads to proteasomal degradation. Autoubiquitinated; interaction with USP7 leads to deubiquitination and prevents degradation. Ubiquitination and degradation takes place during M phase, when phosphorylation at Ser-639 prevents interaction with USP7 and subsequent deubiquitination. Polyubiquitination may be stimulated by DNA damage. In terms of tissue distribution, expressed in thymus, bone marrow, testis, lung and heart. Overexpressed in breast cancer.

It localises to the nucleus. The catalysed reaction is S-ubiquitinyl-[E2 ubiquitin-conjugating enzyme]-L-cysteine + [acceptor protein]-L-lysine = [E2 ubiquitin-conjugating enzyme]-L-cysteine + N(6)-ubiquitinyl-[acceptor protein]-L-lysine.. Its pathway is protein modification; protein ubiquitination. Its function is as follows. Multidomain protein that acts as a key epigenetic regulator by bridging DNA methylation and chromatin modification. Specifically recognizes and binds hemimethylated DNA at replication forks via its YDG domain and recruits DNMT1 methyltransferase to ensure faithful propagation of the DNA methylation patterns through DNA replication. In addition to its role in maintenance of DNA methylation, also plays a key role in chromatin modification: through its tudor-like regions and PHD-type zinc fingers, specifically recognizes and binds histone H3 trimethylated at 'Lys-9' (H3K9me3) and unmethylated at 'Arg-2' (H3R2me0), respectively, and recruits chromatin proteins. Enriched in pericentric heterochromatin where it recruits different chromatin modifiers required for this chromatin replication. Also localizes to euchromatic regions where it negatively regulates transcription possibly by impacting DNA methylation and histone modifications. Has E3 ubiquitin-protein ligase activity by mediating the ubiquitination of target proteins such as histone H3 and PML. It is still unclear how E3 ubiquitin-protein ligase activity is related to its role in chromatin in vivo. Plays a role in DNA repair by cooperating with UHRF2 to ensure recruitment of FANCD2 to interstrand cross-links (ICLs) leading to FANCD2 activation. Acts as a critical player of proper spindle architecture by catalyzing the 'Lys-63'-linked ubiquitination of KIF11, thereby controlling KIF11 localization on the spindle. This chain is E3 ubiquitin-protein ligase UHRF1 (UHRF1), found in Homo sapiens (Human).